Reading from the N-terminus, the 1171-residue chain is WD repeat-containing protein on Y chromosome (1171 aa).

WD repeat units follow at residues 157 to 201 (EIPE…LRSA), 331 to 370 (RIPL…EPSA), 374 to 413 (GHNG…LLQT), 464 to 503 (THAA…RKII), 516 to 555 (IIDI…VVRN), 603 to 643 (FHTD…RRYN), 748 to 787 (KVGD…IPQA), and 831 to 870 (GHLK…LGTL). Residues 1076–1171 (RTSFTLSDYT…TNTMKSSNSH (96 aa)) are disordered. 2 stretches are compositionally biased toward polar residues: residues 1094 to 1106 (SSRN…SSGS) and 1161 to 1171 (KTNTMKSSNSH).

This Drosophila grimshawi (Hawaiian fruit fly) protein is WD repeat-containing protein on Y chromosome.